The sequence spans 598 residues: Elongation factor 4 (598 aa).

The 183-residue stretch at 2-184 (DHIRNFSIIA…AIVKRVPPPR (183 aa)) folds into the tr-type G domain. GTP-binding positions include 14–19 (DHGKST) and 131–134 (NKID).

It belongs to the TRAFAC class translation factor GTPase superfamily. Classic translation factor GTPase family. LepA subfamily.

It is found in the cell inner membrane. The enzyme catalyses GTP + H2O = GDP + phosphate + H(+). Functionally, required for accurate and efficient protein synthesis under certain stress conditions. May act as a fidelity factor of the translation reaction, by catalyzing a one-codon backward translocation of tRNAs on improperly translocated ribosomes. Back-translocation proceeds from a post-translocation (POST) complex to a pre-translocation (PRE) complex, thus giving elongation factor G a second chance to translocate the tRNAs correctly. Binds to ribosomes in a GTP-dependent manner. This chain is Elongation factor 4, found in Syntrophus aciditrophicus (strain SB).